We begin with the raw amino-acid sequence, 145 residues long: Ribosome-binding factor A (145 aa).

Residues 122–132 (KVQRDLESAPR) are compositionally biased toward basic and acidic residues. The interval 122–145 (KVQRDLESAPREDDEGEPDSSSRD) is disordered.

It belongs to the RbfA family. Monomer. Binds 30S ribosomal subunits, but not 50S ribosomal subunits or 70S ribosomes.

The protein localises to the cytoplasm. In terms of biological role, one of several proteins that assist in the late maturation steps of the functional core of the 30S ribosomal subunit. Associates with free 30S ribosomal subunits (but not with 30S subunits that are part of 70S ribosomes or polysomes). Required for efficient processing of 16S rRNA. May interact with the 5'-terminal helix region of 16S rRNA. The protein is Ribosome-binding factor A of Methylorubrum extorquens (strain PA1) (Methylobacterium extorquens).